Consider the following 469-residue polypeptide: Properdin (469 aa).

The signal sequence occupies residues 1-27 (MITEGAQAPRLLLPPLLLLLTLPATGS). 7 consecutive TSP type-1 domains span residues 28–76 (DPVL…QPCR), 77–134 (SPRW…QCCP), 136–191 (MGGW…QVCP), 193–255 (HGAW…PPCP), 257–313 (AGGW…VPCP), 315–377 (DGEW…QHCP), and 379–462 (KGSW…PACK). 3 disulfide bridges follow: C32-C56, C43-C72, and C57-C75. C-linked (Man) tryptophan glycosylation is found at W83 and W86. Disulfide bonds link C89/C127, C93/C133, C104/C111, C132/C170, C148/C184, C152/C190, and C163/C174. O-linked (Fuc...) threonine glycosylation occurs at T92. C-linked (Man) tryptophan glycans are attached at residues W139, W142, and W145. T151 carries an O-linked (Fuc...) threonine glycan. C-linked (Man) tryptophan glycans are attached at residues W196, W199, and W202. Disulfide bonds link C205–C248, C209–C254, and C224–C238. The O-linked (Fuc...) serine glycan is linked to S208. The tract at residues 219–238 (TRSRKCSAPEPSQKPPGKPC) is disordered. C-linked (Man) tryptophan glycosylation is found at W260 and W263. Cystine bridges form between C269/C306, C273/C312, and C284/C296. A glycan (O-linked (Fuc...) threonine) is linked at T272. C-linked (Man) tryptophan glycosylation is found at W321 and W324. Cystine bridges form between C327/C370, C337/C376, and C350/C360. The tract at residues 351-359 (RGRKFDGHR) is interaction with Complement C3 beta chain. W382, W385, and W388 each carry a C-linked (Man) tryptophan glycan. Disulfide bonds link C391–C455, C395–C461, and C407–C439. N428 carries N-linked (GlcNAc...) (complex) asparagine glycosylation.

In terms of assembly, in plasma, properdin exists as dimers, trimers or tetramers in the relative proportions of 26:54:20. Interacts with the pro-C3-convertase enzyme complex (C3b-Bb) comprised of Complement C3 beta chain (C3b) and the Complement factor B Bb fragment (Bb), where it binds (via its TSP type-1 5 domain) with C3b and Bb. This interaction stabilizes the complex and allows it to become the active C3-convertase enzyme complex (C3b-Bb-FP). Interacts with C3b. Interacts with CFB.

The protein resides in the secreted. In terms of biological role, a positive regulator of the alternate pathway (AP) of complement. It binds to and stabilizes the C3- and C5-convertase enzyme complexes. Inhibits CFI-CFH mediated degradation of Complement C3 beta chain (C3b). The polypeptide is Properdin (Homo sapiens (Human)).